We begin with the raw amino-acid sequence, 102 residues long: Protein translation factor SUI1 homolog (102 aa).

This sequence belongs to the SUI1 family.

In Cenarchaeum symbiosum (strain A), this protein is Protein translation factor SUI1 homolog.